The primary structure comprises 361 residues: Molybdopterin synthase catalytic subunit (361 aa).

Substrate-binding positions include 101 to 102 (HR), Lys117, and 124 to 126 (KKE).

Belongs to the MoaE family. MOCS2B subfamily. As to quaternary structure, heterotetramer; composed of 2 small (Mocs2A) and 2 large (Mocs2B) subunits.

It is found in the cytoplasm. It carries out the reaction 2 [molybdopterin-synthase sulfur-carrier protein]-C-terminal-Gly-aminoethanethioate + cyclic pyranopterin phosphate + H2O = molybdopterin + 2 [molybdopterin-synthase sulfur-carrier protein]-C-terminal Gly-Gly + 2 H(+). Its pathway is cofactor biosynthesis; molybdopterin biosynthesis. Its function is as follows. Catalytic subunit of the molybdopterin synthase complex, a complex that catalyzes the conversion of precursor Z into molybdopterin. Acts by mediating the incorporation of 2 sulfur atoms from thiocarboxylated Mocs2A into precursor Z to generate a dithiolene group. The chain is Molybdopterin synthase catalytic subunit from Drosophila pseudoobscura pseudoobscura (Fruit fly).